A 334-amino-acid polypeptide reads, in one-letter code: Deoxyhypusine synthase (334 aa).

NAD(+) is bound by residues 73–77, 99–101, E105, and D207; these read SNIIS and TGG. 104-105 contributes to the spermidine binding site; sequence EE. Spermidine is bound by residues D212 and H256. 276-277 is an NAD(+) binding site; that stretch reads NA. Spermidine-binding positions include 282 to 284 and 291 to 297; these read GSD and EAVSWGK. The active-site Nucleophile is K297. 310–311 lines the NAD(+) pocket; sequence DA.

The protein belongs to the deoxyhypusine synthase family. The cofactor is NAD(+).

It catalyses the reaction [eIF5A protein]-L-lysine + spermidine = [eIF5A protein]-deoxyhypusine + propane-1,3-diamine. The protein operates within protein modification; eIF5A hypusination. Functionally, catalyzes the NAD-dependent oxidative cleavage of spermidine and the subsequent transfer of the butylamine moiety of spermidine to the epsilon-amino group of a specific lysine residue of the eIF-5A precursor protein to form the intermediate deoxyhypusine residue. The protein is Deoxyhypusine synthase (DYS1) of Encephalitozoon cuniculi (strain GB-M1) (Microsporidian parasite).